The following is an 84-amino-acid chain: Large ribosomal subunit protein bL27 (84 aa).

Positions 1–21 (MAHKKGGGSTKNGRDSNPKYL) are disordered.

It belongs to the bacterial ribosomal protein bL27 family.

This chain is Large ribosomal subunit protein bL27, found in Chlorobium luteolum (strain DSM 273 / BCRC 81028 / 2530) (Pelodictyon luteolum).